A 150-amino-acid chain; its full sequence is Arginine repressor (150 aa).

Belongs to the ArgR family.

It is found in the cytoplasm. It participates in amino-acid biosynthesis; L-arginine biosynthesis [regulation]. Regulates arginine biosynthesis genes. This chain is Arginine repressor, found in Clostridium kluyveri (strain NBRC 12016).